The sequence spans 683 residues: DNA ligase (683 aa).

NAD(+)-binding positions include 43-47 (DAEYD), 92-93 (SL), and Glu125. Lys127 (N6-AMP-lysine intermediate) is an active-site residue. Residues Arg148, Glu185, Lys303, and Lys327 each contribute to the NAD(+) site. Zn(2+) is bound by residues Cys421, Cys424, Cys439, and Cys445. One can recognise a BRCT domain in the interval 604–683 (IADNPLKGKN…QEFIALTGEN (80 aa)).

Belongs to the NAD-dependent DNA ligase family. LigA subfamily. Requires Mg(2+) as cofactor. Mn(2+) serves as cofactor.

The catalysed reaction is NAD(+) + (deoxyribonucleotide)n-3'-hydroxyl + 5'-phospho-(deoxyribonucleotide)m = (deoxyribonucleotide)n+m + AMP + beta-nicotinamide D-nucleotide.. DNA ligase that catalyzes the formation of phosphodiester linkages between 5'-phosphoryl and 3'-hydroxyl groups in double-stranded DNA using NAD as a coenzyme and as the energy source for the reaction. It is essential for DNA replication and repair of damaged DNA. The chain is DNA ligase from Actinobacillus pleuropneumoniae serotype 5b (strain L20).